The primary structure comprises 317 residues: uncharacterized protein (317 aa).

7 helical membrane-spanning segments follow: residues 18–38 (FWLI…LVII), 58–78 (IILS…GFIF), 92–112 (FLGS…WWSF), 130–150 (LFSA…AWAV), 159–179 (LFHI…KLLP), 202–222 (CSFL…LSTV), and 252–272 (NLLN…LLIA).

It belongs to the CbiQ family.

The protein resides in the cell membrane. This is an uncharacterized protein from Mycoplasma genitalium (strain ATCC 33530 / DSM 19775 / NCTC 10195 / G37) (Mycoplasmoides genitalium).